The sequence spans 479 residues: Odorant receptor coreceptor (479 aa).

The Cytoplasmic portion of the chain corresponds to 1 to 43; sequence MHVQPTKYHGLVLDLMPNIRLMQGFGHFLFRYVSGPVLIRKLY. The helical transmembrane segment at 44-64 threads the bilayer; that stretch reads SWWNLIMILLQYFAIMGNLVM. Residues 65–73 are Extracellular-facing; the sequence is NTGDVNELT. A helical transmembrane segment spans residues 74–94; that stretch reads ANTITTLFFTHSVTKFIYVAV. Residues 95 to 133 lie on the Cytoplasmic side of the membrane; the sequence is NSEHFYRTLGIWNQPNSHSLFAESDARYHSIALAKMRKL. A helical membrane pass occupies residues 134 to 154; the sequence is LVMVMVTTVLSVVAWITITFF. Topologically, residues 155 to 187 are extracellular; that stretch reads GDSVKNVFDKETNETYTVEIPRLPIKALYPWDA. Residue asparagine 167 is glycosylated (N-linked (GlcNAc...) asparagine). The chain crosses the membrane as a helical span at residues 188 to 208; sequence MSGVPYFFSFVYQAYFLLFSM. Residues 209-344 are Cytoplasmic-facing; that stretch reads CQANLADVMF…VERHKHVVRL (136 aa). A helical transmembrane segment spans residues 345-365; the sequence is VSAIGETYGAALLLHMLTSTI. Topologically, residues 366-383 are extracellular; that stretch reads KLTLLAYQATKIDALNVY. The helical transmembrane segment at 384–404 threads the bilayer; sequence GLTVIGYLVYALAQVFLFCIF. Topologically, residues 405–455 are cytoplasmic; that stretch reads GNRLIEESSSVMEAAYSCHWYDGSEEAKTFVQIVCQQCQKAMTISGAKFFT. The chain crosses the membrane as a helical span at residues 456–476; the sequence is VSLDLFASVLGAVVTYFMVLV. At 477 to 479 the chain is on the extracellular side; it reads QLK.

It belongs to the insect chemoreceptor superfamily. Heteromeric odorant receptor channel (TC 1.A.69) family. Orco subfamily. As to quaternary structure, heterodimer with conventional odorant receptors (ORs). In terms of tissue distribution, expressed in female antenna, maxillary palp and proboscis. Not detected in male tissues.

It is found in the cell membrane. In terms of biological role, odorant coreceptor which complexes with conventional odorant receptors (ORs) to form odorant-sensing units, providing sensitive and prolonged odorant signaling and calcium permeability. Orco is a universal and integral part of the functional odorant receptor, involved in the dendritic localization of other olfactory receptors. Required for detecting a host for blood feeding. Plays a key role in preferred attraction of females for humans over non-human hosts for blood feeding. The sequence is that of Odorant receptor coreceptor from Aedes albopictus (Asian tiger mosquito).